A 712-amino-acid polypeptide reads, in one-letter code: Ribosome-releasing factor 2, mitochondrial (712 aa).

The N-terminal 29 residues, 1–29, are a transit peptide targeting the mitochondrion; sequence MLRCAWQNGPRQSNRWLRHLSNQIWKRSY. Positions 31 to 310 constitute a tr-type G domain; it reads SKIRNIGILA…AVNSYLPAPE (280 aa). Residues 40 to 47, 104 to 108, and 158 to 161 contribute to the GTP site; these read AHIDAGKT, DTPGH, and NKMD.

It belongs to the TRAFAC class translation factor GTPase superfamily. Classic translation factor GTPase family. EF-G/EF-2 subfamily.

The protein resides in the mitochondrion. Mitochondrial GTPase that mediates the disassembly of ribosomes from messenger RNA at the termination of mitochondrial protein biosynthesis. Not involved in the GTP-dependent ribosomal translocation step during translation elongation. The protein is Ribosome-releasing factor 2, mitochondrial of Drosophila yakuba (Fruit fly).